Consider the following 267-residue polypeptide: Transcription factor HES-1 (267 aa).

The interval 1-45 (MPADLMEKNSSSPVAATPASMSNTPDKPKTASEHRKSSKPIMEKR) is disordered. Over residues 8 to 25 (KNSSSPVAATPASMSNTP) the composition is skewed to polar residues. Over residues 26-35 (DKPKTASEHR) the composition is skewed to basic and acidic residues. A bHLH domain is found at 34 to 91 (HRKSSKPIMEKRRRARINESLGQLKTLILDALKKDSSRHSKLEKADILEMTVKHLRNL). Residues 110–143 (YRAGFSECMNEVTRFLSTCEGVNTDVRTRLLGHL) form the Orange domain. The WRPW motif signature appears at 264–267 (WRPW).

In terms of assembly, transcription repression requires formation of a complex with a corepressor protein of the Groucho/TLE family. Interacts with the bHLH protein hes2, and binds DNA in the form of a heterodimer with the bHLH protein hey1/hrt1. Interacts with the bHLH protein hes6; this interaction may inhibit the transcriptional repressor activity.

The protein resides in the nucleus. In terms of biological role, transcriptional repressor of a subset of early mesodermal genes including myod1 and t/bra. Binds DNA on N-box motifs: 5'-CACNAG-3'. Acts as a negative regulator of myogenesis, mediating Notch signaling to repress expression of myod1. The sequence is that of Transcription factor HES-1 from Xenopus tropicalis (Western clawed frog).